A 75-amino-acid polypeptide reads, in one-letter code: Protein SlyX homolog (75 aa).

Belongs to the SlyX family.

The sequence is that of Protein SlyX homolog from Vibrio vulnificus (strain CMCP6).